Here is a 704-residue protein sequence, read N- to C-terminus: Structure-specific endonuclease subunit SLX1 homolog (704 aa).

One can recognise a GIY-YIG domain in the interval 4–90; sequence RFHCVYLLTS…TASARLRHTI (87 aa). Disordered stretches follow at residues 157–180, 290–323, and 354–378; these read ESPR…ADGV, ASFA…RVRT, and GAAL…SRPP. Composition is skewed to polar residues over residues 161 to 175 and 311 to 320; these read VGTQ…SLQG and AGSSTPSPQR. Residues 446 to 526 form an SLX1-type zinc finger; sequence CSLCALPLQP…PSQPCPCPLC (81 aa). Disordered stretches follow at residues 601–629 and 650–671; these read VPGA…SSPI and ASLA…GHSN. Residues 650–662 are compositionally biased toward low complexity; the sequence is ASLAALSPTSASP.

The protein belongs to the SLX1 family. As to quaternary structure, forms a heterodimer with a member of the SLX4 family. It depends on a divalent metal cation as a cofactor.

The protein localises to the nucleus. Catalytic subunit of a heterodimeric structure-specific endonuclease that resolves DNA secondary structures generated during DNA repair and recombination. Has endonuclease activity towards branched DNA substrates, introducing single-strand cuts in duplex DNA close to junctions with ss-DNA. The protein is Structure-specific endonuclease subunit SLX1 homolog of Leishmania major.